The following is a 160-amino-acid chain: SsrA-binding protein (160 aa).

The protein belongs to the SmpB family.

It is found in the cytoplasm. Required for rescue of stalled ribosomes mediated by trans-translation. Binds to transfer-messenger RNA (tmRNA), required for stable association of tmRNA with ribosomes. tmRNA and SmpB together mimic tRNA shape, replacing the anticodon stem-loop with SmpB. tmRNA is encoded by the ssrA gene; the 2 termini fold to resemble tRNA(Ala) and it encodes a 'tag peptide', a short internal open reading frame. During trans-translation Ala-aminoacylated tmRNA acts like a tRNA, entering the A-site of stalled ribosomes, displacing the stalled mRNA. The ribosome then switches to translate the ORF on the tmRNA; the nascent peptide is terminated with the 'tag peptide' encoded by the tmRNA and targeted for degradation. The ribosome is freed to recommence translation, which seems to be the essential function of trans-translation. In Cronobacter sakazakii (strain ATCC BAA-894) (Enterobacter sakazakii), this protein is SsrA-binding protein.